Consider the following 177-residue polypeptide: Bifunctional protein PyrR (177 aa).

A PRPP-binding motif is present at residues 99 to 111 (VVLVDDVLFTGRT).

It belongs to the purine/pyrimidine phosphoribosyltransferase family. PyrR subfamily.

It catalyses the reaction UMP + diphosphate = 5-phospho-alpha-D-ribose 1-diphosphate + uracil. In terms of biological role, regulates the transcription of the pyrimidine nucleotide (pyr) operon in response to exogenous pyrimidines. Functionally, also displays a weak uracil phosphoribosyltransferase activity which is not physiologically significant. The protein is Bifunctional protein PyrR of Citrifermentans bemidjiense (strain ATCC BAA-1014 / DSM 16622 / JCM 12645 / Bem) (Geobacter bemidjiensis).